The primary structure comprises 139 residues: Nucleoside diphosphate kinase (139 aa).

K11, F59, R87, T93, R104, and N114 together coordinate ATP. The active-site Pros-phosphohistidine intermediate is the H117.

The protein belongs to the NDK family. Homotetramer. Mg(2+) serves as cofactor.

The protein localises to the cytoplasm. It carries out the reaction a 2'-deoxyribonucleoside 5'-diphosphate + ATP = a 2'-deoxyribonucleoside 5'-triphosphate + ADP. The catalysed reaction is a ribonucleoside 5'-diphosphate + ATP = a ribonucleoside 5'-triphosphate + ADP. Functionally, major role in the synthesis of nucleoside triphosphates other than ATP. The ATP gamma phosphate is transferred to the NDP beta phosphate via a ping-pong mechanism, using a phosphorylated active-site intermediate. The chain is Nucleoside diphosphate kinase from Wolbachia pipientis subsp. Culex pipiens (strain wPip).